The sequence spans 958 residues: UvrABC system protein A (958 aa).

One can recognise an ABC transporter 1 domain in the interval 1 to 232; sequence MQSKSIKIQG…IETALKLGEG (232 aa). Residue 33-40 participates in ATP binding; it reads GLSGSGKS. A C4-type zinc finger spans residues 252–279; the sequence is CPICGFSIGELEPRLFSFNSPFGACPSC. ABC transporter domains lie at 315–593 and 604–935; these read QYYP…KYLS and RRKP…GKYL. 639-646 serves as a coordination point for ATP; sequence GVSGSGKS. The C4-type zinc finger occupies 738–764; that stretch reads CEACRGDGILKIEMHFLPDVYVPCEVC.

The protein belongs to the ABC transporter superfamily. UvrA family. As to quaternary structure, forms a heterotetramer with UvrB during the search for lesions.

It localises to the cytoplasm. Functionally, the UvrABC repair system catalyzes the recognition and processing of DNA lesions. UvrA is an ATPase and a DNA-binding protein. A damage recognition complex composed of 2 UvrA and 2 UvrB subunits scans DNA for abnormalities. When the presence of a lesion has been verified by UvrB, the UvrA molecules dissociate. This Oceanobacillus iheyensis (strain DSM 14371 / CIP 107618 / JCM 11309 / KCTC 3954 / HTE831) protein is UvrABC system protein A.